Reading from the N-terminus, the 658-residue chain is Threonine--tRNA ligase (658 aa).

In terms of domain architecture, TGS spans 1–64 (MSFSISLSFP…EQSGQVEIIT (64 aa)). A catalytic region spans residues 246-549 (DHRRLGREMD…LIENFAGHMP (304 aa)). Zn(2+) is bound by residues Cys-343, His-394, and His-526.

The protein belongs to the class-II aminoacyl-tRNA synthetase family. Homodimer. Zn(2+) serves as cofactor.

The protein resides in the cytoplasm. The enzyme catalyses tRNA(Thr) + L-threonine + ATP = L-threonyl-tRNA(Thr) + AMP + diphosphate + H(+). Its function is as follows. Catalyzes the attachment of threonine to tRNA(Thr) in a two-step reaction: L-threonine is first activated by ATP to form Thr-AMP and then transferred to the acceptor end of tRNA(Thr). Also edits incorrectly charged L-seryl-tRNA(Thr). The chain is Threonine--tRNA ligase from Bartonella bacilliformis (strain ATCC 35685 / KC583 / Herrer 020/F12,63).